Here is a 154-residue protein sequence, read N- to C-terminus: 3-hydroxyacyl-[acyl-carrier-protein] dehydratase FabZ (154 aa).

Residue His54 is part of the active site.

The protein belongs to the thioester dehydratase family. FabZ subfamily.

It localises to the cytoplasm. It catalyses the reaction a (3R)-hydroxyacyl-[ACP] = a (2E)-enoyl-[ACP] + H2O. In terms of biological role, involved in unsaturated fatty acids biosynthesis. Catalyzes the dehydration of short chain beta-hydroxyacyl-ACPs and long chain saturated and unsaturated beta-hydroxyacyl-ACPs. The chain is 3-hydroxyacyl-[acyl-carrier-protein] dehydratase FabZ from Shewanella putrefaciens (strain CN-32 / ATCC BAA-453).